A 102-amino-acid chain; its full sequence is Large ribosomal subunit protein uL24 (102 aa).

Belongs to the universal ribosomal protein uL24 family. As to quaternary structure, part of the 50S ribosomal subunit.

One of two assembly initiator proteins, it binds directly to the 5'-end of the 23S rRNA, where it nucleates assembly of the 50S subunit. Functionally, one of the proteins that surrounds the polypeptide exit tunnel on the outside of the subunit. In Ralstonia nicotianae (strain ATCC BAA-1114 / GMI1000) (Ralstonia solanacearum), this protein is Large ribosomal subunit protein uL24.